Consider the following 920-residue polypeptide: Isoleucine--tRNA ligase (920 aa).

Residues 58–68 carry the 'HIGH' region motif; the sequence is PYANGHLHLGH. Glu569 is an L-isoleucyl-5'-AMP binding site. Residues 610–614 carry the 'KMSKS' region motif; it reads KMSKS. Residue Lys613 participates in ATP binding. The Zn(2+) site is built by Cys895, Cys898, Cys910, and Cys913.

This sequence belongs to the class-I aminoacyl-tRNA synthetase family. IleS type 1 subfamily. As to quaternary structure, monomer. Zn(2+) serves as cofactor.

It localises to the cytoplasm. The catalysed reaction is tRNA(Ile) + L-isoleucine + ATP = L-isoleucyl-tRNA(Ile) + AMP + diphosphate. In terms of biological role, catalyzes the attachment of isoleucine to tRNA(Ile). As IleRS can inadvertently accommodate and process structurally similar amino acids such as valine, to avoid such errors it has two additional distinct tRNA(Ile)-dependent editing activities. One activity is designated as 'pretransfer' editing and involves the hydrolysis of activated Val-AMP. The other activity is designated 'posttransfer' editing and involves deacylation of mischarged Val-tRNA(Ile). This Helicobacter pylori (strain J99 / ATCC 700824) (Campylobacter pylori J99) protein is Isoleucine--tRNA ligase.